Reading from the N-terminus, the 302-residue chain is Putative 2-dehydro-3-deoxy-D-gluconate aldolase YagE (302 aa).

Catalysis depends on charge relay system residues Ser49 and Tyr112. The active-site Proton donor is Tyr138. The active-site Schiff-base intermediate with substrate is the Lys167.

It belongs to the DapA family. As to quaternary structure, a dimer of dimers.

It is found in the cytoplasm. The enzyme catalyses 2-dehydro-3-deoxy-D-gluconate = D-glyceraldehyde + pyruvate. It catalyses the reaction 2-dehydro-3-deoxy-D-arabinonate = glycolaldehyde + pyruvate. Functionally, catalyzes the formation of 2-keto-3-deoxy-gluconate (KDG) from pyruvate and glyceraldehyde. May also function as a 2-dehydro-3-deoxy-D-pentonate aldolase. Overexpression leads to increased growth (over 2 hours) in the presence of the antibiotics norfloxacin, ampicillin and streptomycin. The chain is Putative 2-dehydro-3-deoxy-D-gluconate aldolase YagE (yagE) from Escherichia coli (strain K12).